A 408-amino-acid polypeptide reads, in one-letter code: MPGHLQEGFGCVVTNRFDQLFDDESDPFEVLKAAENKKKEAGGGGVGGPGAKSAAQAAAQTNSNAAGKQLRKESQKDRKNPLPPSVGVVDKKEETQPPVALKKEGIRRVGRRPDQQLQGEGKIIDRRPERRPPRERRFEKPLEEKGEGGEFSVDRPIIDRPIRGRGGLGRGRGGRGRGMGRGDGFDSRGKREFDRHSGSDRSSFSHYSGLKHEDKRGGSGSHNWGTVKDELTESPKYIQKQISYNYSDLDQSNVTEETPEGEEHHPVADTENKENEVEEVKEEGPKEMTLDEWKAIQNKDRAKVEFNIRKPNEGADGQWKKGFVLHKSKSEEAHAEDSVMDHHFRKPANDITSQLEINFGDLGRPGRGGRGGRGGRGRGGRPNRGSRTDKSSASAPDVDDPEAFPALA.

Ser25 is modified (phosphoserine). Disordered stretches follow at residues 33-292 (AAEN…TLDE) and 328-408 (SKSE…PALA). A compositionally biased stretch (low complexity) spans 51-68 (AKSAAQAAAQTNSNAAGK). Lys52 bears the N6-acetyllysine; alternate mark. Lys52 is covalently cross-linked (Glycyl lysine isopeptide (Lys-Gly) (interchain with G-Cter in SUMO1); alternate). Lys68 is subject to N6-acetyllysine. 3 stretches are compositionally biased toward basic and acidic residues: residues 70-80 (LRKESQKDRKN), 89-114 (VDKKEETQPPVALKKEGIRRVGRRPD), and 122-162 (KIID…DRPI). Lys102 participates in a covalent cross-link: Glycyl lysine isopeptide (Lys-Gly) (interchain with G-Cter in SUMO1); alternate. Residue Lys102 forms a Glycyl lysine isopeptide (Lys-Gly) (interchain with G-Cter in SUMO2); alternate linkage. An N6-acetyllysine mark is found at Lys122 and Lys140. Over residues 164 to 182 (GRGGLGRGRGGRGRGMGRG) the composition is skewed to gly residues. Arg165 and Arg188 each carry omega-N-methylarginine. Residues 183–199 (DGFDSRGKREFDRHSGS) are compositionally biased toward basic and acidic residues. Ser197 carries the post-translational modification Phosphoserine. Ser199 is modified (phosphoserine; by MTOR). Ser203, Ser205, and Ser208 each carry phosphoserine. Lys211 carries the N6-acetyllysine; alternate modification. Lys211 is covalently cross-linked (Glycyl lysine isopeptide (Lys-Gly) (interchain with G-Cter in SUMO2); alternate). Omega-N-methylarginine is present on Arg216. Ser221 carries the post-translational modification Phosphoserine. Residue His222 forms a Glycyl lysine isopeptide (Lys-Gly) (interchain with G-Cter in SUMO2) linkage. At Thr226 the chain carries Phosphothreonine; by MTOR. Lys228 is covalently cross-linked (Glycyl lysine isopeptide (Lys-Gly) (interchain with G-Cter in SUMO1); alternate). A Glycyl lysine isopeptide (Lys-Gly) (interchain with G-Cter in SUMO2); alternate cross-link involves residue Lys228. Lys228 participates in a covalent cross-link: Glycyl lysine isopeptide (Lys-Gly) (interchain with G-Cter in SUMO2). Phosphoserine occurs at positions 231, 234, and 237. Position 234 is a phosphothreonine (Ser234). Lys240 carries the post-translational modification Phosphothreonine. Positions 240-253 (KQISYNYSDLDQSN) are enriched in polar residues. Basic and acidic residues predominate over residues 261 to 275 (GEEHHPVADTENKEN). Lys281 is covalently cross-linked (Glycyl lysine isopeptide (Lys-Gly) (interchain with G-Cter in SUMO1); alternate). A Glycyl lysine isopeptide (Lys-Gly) (interchain with G-Cter in SUMO2); alternate cross-link involves residue Lys281. 2 stretches are compositionally biased toward basic and acidic residues: residues 282-292 (EEGPKEMTLDE) and 328-342 (SKSEEAHAEDSVMDH). An N6-acetyllysine modification is found at Lys329. The residue at position 330 (Ser330) is a Phosphoserine. A compositionally biased stretch (gly residues) spans 363-372 (GRPGRGGRGG). Arg364, Arg367, and Arg370 each carry omega-N-methylarginine. Phosphoserine occurs at positions 392 and 394.

This sequence belongs to the SERBP1-HABP4 family. As to quaternary structure, associates with mature 80S ribosomes. Interacts with EEF2/eEF2; interaction sequesters EEF2/eEF2 at the A-site of the ribosome, thereby blocking the interaction sites of the mRNA-tRNA complex, promoting ribosome stabilization and hibernation. Interacts with SPIN1. Interacts with CHD3 and TDRD3. Interacts with ZDHHC17 (via ANK repeats). Post-translationally, phosphorylation by MTOR inhibits SERBP1 and relieves ribosome hibernation. Expressed at high level in the heart, skeletal muscle and kidney, and at low levels in placenta, liver and brain.

It localises to the cytoplasm. The protein resides in the nucleus. Its subcellular location is the perinuclear region. Functionally, ribosome-binding protein that promotes ribosome hibernation, a process during which ribosomes are stabilized in an inactive state and preserved from proteasomal degradation. Acts via its association with EEF2/eEF2 factor, sequestering EEF2/eEF2 at the A-site of the ribosome and promoting ribosome stabilization and storage in an inactive state. May also play a role in the regulation of mRNA stability: binds to the 3'-most 134 nt of the SERPINE1/PAI1 mRNA, a region which confers cyclic nucleotide regulation of message decay. Seems to play a role in PML-nuclear bodies formation. The polypeptide is SERPINE1 mRNA-binding protein 1 (Homo sapiens (Human)).